Reading from the N-terminus, the 166-residue chain is Tetranectin-like protein (166 aa).

Disulfide bonds link Cys37–Cys47, Cys64–Cys160, and Cys136–Cys152. The C-type lectin domain maps to 43 to 161; it reads IHKKCYLASR…CRSEKRYICE (119 aa).

In Carcharhinus perezii (Reef shark), this protein is Tetranectin-like protein.